Consider the following 392-residue polypeptide: Nuclear speckle splicing regulatory protein 1 homolog (392 aa).

Disordered regions lie at residues 1–73 (MASK…IFDY), 113–169 (RQLE…AFND), and 187–357 (LLND…ARLD). 5 stretches are compositionally biased toward basic and acidic residues: residues 54 to 65 (KAAEREHQKAEA), 113 to 132 (RQLE…REKE), 149 to 160 (KQQEEVKKHREQ), 205 to 238 (QKNV…KSIY), and 313 to 357 (KSIE…ARLD). The stretch at 76 to 132 (NYDEIQAIKNEKKEEARKADKNRESKYAENIIKAHARRQLEQFSREERQQLREREKE) forms a coiled coil.

The protein belongs to the NSRP1 family. As to expression, expressed in the intestine, nervous system and head neurons in both larvae and adults. Expressed in the distal tip cell.

The protein resides in the cytoplasm. The protein localises to the nucleus. Required for the cessation of distal tip cell migration at the end of larval morphogenesis. The chain is Nuclear speckle splicing regulatory protein 1 homolog (ccdc-55) from Caenorhabditis elegans.